The primary structure comprises 288 residues: Acetyl-coenzyme A carboxylase carboxyl transferase subunit beta (288 aa).

A CoA carboxyltransferase N-terminal domain is found at 34 to 288 (LFAKCPACKH…HLVSFHGGGQ (255 aa)). The Zn(2+) site is built by Cys38, Cys41, Cys56, and Cys59. The segment at 38–59 (CPACKHMIYKKDLGLAKICPTC) adopts a C4-type zinc-finger fold.

This sequence belongs to the AccD/PCCB family. In terms of assembly, acetyl-CoA carboxylase is a heterohexamer composed of biotin carboxyl carrier protein (AccB), biotin carboxylase (AccC) and two subunits each of ACCase subunit alpha (AccA) and ACCase subunit beta (AccD). It depends on Zn(2+) as a cofactor.

The protein resides in the cytoplasm. It carries out the reaction N(6)-carboxybiotinyl-L-lysyl-[protein] + acetyl-CoA = N(6)-biotinyl-L-lysyl-[protein] + malonyl-CoA. It functions in the pathway lipid metabolism; malonyl-CoA biosynthesis; malonyl-CoA from acetyl-CoA: step 1/1. In terms of biological role, component of the acetyl coenzyme A carboxylase (ACC) complex. Biotin carboxylase (BC) catalyzes the carboxylation of biotin on its carrier protein (BCCP) and then the CO(2) group is transferred by the transcarboxylase to acetyl-CoA to form malonyl-CoA. In Streptococcus pyogenes serotype M49 (strain NZ131), this protein is Acetyl-coenzyme A carboxylase carboxyl transferase subunit beta.